Consider the following 213-residue polypeptide: Peptidyl-prolyl cis-trans isomerase B (213 aa).

The signal sequence occupies residues 1-23; sequence MAVLRVLCGLLLVSILFLGFVLS. The 163-residue stretch at 35 to 197 folds into the PPIase cyclophilin-type domain; the sequence is FFDIEVDEQP…KSVKIANCGH (163 aa). Residues 210 to 213 carry the Prevents secretion from ER motif; the sequence is DAAE.

This sequence belongs to the cyclophilin-type PPIase family. PPIase B subfamily.

It is found in the endoplasmic reticulum lumen. It catalyses the reaction [protein]-peptidylproline (omega=180) = [protein]-peptidylproline (omega=0). With respect to regulation, inhibited by cyclosporin A (CsA). In terms of biological role, PPIases accelerate the folding of proteins. It catalyzes the cis-trans isomerization of proline imidic peptide bonds in oligopeptides. This chain is Peptidyl-prolyl cis-trans isomerase B, found in Schistosoma japonicum (Blood fluke).